The chain runs to 234 residues: Two-component response regulator ARR9 (234 aa).

The Response regulatory domain maps to 10–147 (HVLAVDDSLF…DLNKLKPHMM (138 aa)). At Asp80 the chain carries 4-aspartylphosphate.

Belongs to the ARR family. Type-A subfamily. Interacts with AHP1 and AHP3. Post-translationally, two-component system major event consists of a His-to-Asp phosphorelay between a sensor histidine kinase (HK) and a response regulator (RR). In plants, the His-to-Asp phosphorelay involves an additional intermediate named Histidine-containing phosphotransfer protein (HPt). This multistep phosphorelay consists of a His-Asp-His-Asp sequential transfer of a phosphate group between first a His and an Asp of the HK protein, followed by the transfer to a conserved His of the HPt protein and finally the transfer to an Asp in the receiver domain of the RR protein. Predominantly expressed in roots.

It localises to the nucleus. Its function is as follows. Functions as a response regulator involved in His-to-Asp phosphorelay signal transduction system. Phosphorylation of the Asp residue in the receiver domain activates the ability of the protein to promote the transcription of target genes. Type-A response regulators seem to act as negative regulators of the cytokinin signaling. The protein is Two-component response regulator ARR9 (ARR9) of Arabidopsis thaliana (Mouse-ear cress).